Reading from the N-terminus, the 128-residue chain is Aspartate 1-decarboxylase (128 aa).

Residue Ser25 is the Schiff-base intermediate with substrate; via pyruvic acid of the active site. Ser25 is modified (pyruvic acid (Ser)). Substrate is bound at residue Thr57. The active-site Proton donor is Tyr58. 73-75 (GSA) is a binding site for substrate.

Belongs to the PanD family. In terms of assembly, heterooctamer of four alpha and four beta subunits. Requires pyruvate as cofactor. Post-translationally, is synthesized initially as an inactive proenzyme, which is activated by self-cleavage at a specific serine bond to produce a beta-subunit with a hydroxyl group at its C-terminus and an alpha-subunit with a pyruvoyl group at its N-terminus.

It localises to the cytoplasm. The enzyme catalyses L-aspartate + H(+) = beta-alanine + CO2. It functions in the pathway cofactor biosynthesis; (R)-pantothenate biosynthesis; beta-alanine from L-aspartate: step 1/1. Functionally, catalyzes the pyruvoyl-dependent decarboxylation of aspartate to produce beta-alanine. This is Aspartate 1-decarboxylase from Burkholderia thailandensis (strain ATCC 700388 / DSM 13276 / CCUG 48851 / CIP 106301 / E264).